The following is a 120-amino-acid chain: NAD(P)H-quinone oxidoreductase subunit 3, chloroplastic (120 aa).

The next 3 membrane-spanning stretches (helical) occupy residues 9 to 29 (IFWA…LISG), 64 to 84 (MFAL…PWAM), and 88 to 108 (VLGV…IVGS).

The protein belongs to the complex I subunit 3 family. NDH is composed of at least 16 different subunits, 5 of which are encoded in the nucleus.

It localises to the plastid. Its subcellular location is the chloroplast thylakoid membrane. The catalysed reaction is a plastoquinone + NADH + (n+1) H(+)(in) = a plastoquinol + NAD(+) + n H(+)(out). It catalyses the reaction a plastoquinone + NADPH + (n+1) H(+)(in) = a plastoquinol + NADP(+) + n H(+)(out). Its function is as follows. NDH shuttles electrons from NAD(P)H:plastoquinone, via FMN and iron-sulfur (Fe-S) centers, to quinones in the photosynthetic chain and possibly in a chloroplast respiratory chain. The immediate electron acceptor for the enzyme in this species is believed to be plastoquinone. Couples the redox reaction to proton translocation, and thus conserves the redox energy in a proton gradient. The protein is NAD(P)H-quinone oxidoreductase subunit 3, chloroplastic of Buxus microphylla (Littleleaf boxwood).